Here is a 514-residue protein sequence, read N- to C-terminus: Alpha-1B adrenergic receptor (514 aa).

The Extracellular segment spans residues 1-45; sequence MNPDLDTGHNTSAPAHWGELKDANFTGPNQTSSNSTLPQLDVTRA. Residues asparagine 10, asparagine 24, asparagine 29, and asparagine 34 are each glycosylated (N-linked (GlcNAc...) asparagine). The chain crosses the membrane as a helical span at residues 46-69; that stretch reads ISVGCLGAFILFAIVGNILVILSV. Residues 70–82 lie on the Cytoplasmic side of the membrane; sequence ACNRHLRTPTNYF. Residues 83–104 traverse the membrane as a helical segment; the sequence is IVNLAIADLLLSFTDLPFSATL. Over 105–114 the chain is Extracellular; that stretch reads EVLGYWVLGR. Residues 115–140 traverse the membrane as a helical segment; the sequence is IFCDIWAAVDVLCCTASILSLCAISI. Residues cysteine 117 and cysteine 194 are joined by a disulfide bond. Topologically, residues 141-160 are cytoplasmic; that stretch reads DRYIGVRYSLQYPTLVTRRK. The chain crosses the membrane as a helical span at residues 161–183; sequence AILALLSVWVLSTVISIGPLLGW. The Extracellular segment spans residues 184 to 200; sequence KEPAPNDDKECGVTEEP. Residues 201–223 form a helical membrane-spanning segment; the sequence is FYALFSSLGSFYIPLAVILVMYC. Residues 224–294 lie on the Cytoplasmic side of the membrane; the sequence is RVYIVAKRTT…FSREKKAAKT (71 aa). Threonine 263 bears the Phosphothreonine mark. The chain crosses the membrane as a helical span at residues 295-318; the sequence is LGIVVGMFILCWLPFFIALPLGSL. Residues 319 to 325 are Extracellular-facing; that stretch reads FSTLKPP. The helical transmembrane segment at 326–350 threads the bilayer; sequence DAVFKVVFWLGYFNSCLNPIIYPCS. Residues 351–514 are Cytoplasmic-facing; the sequence is SKEFKRAFMR…SNMPLAPGHF (164 aa). Residue cysteine 364 is the site of S-palmitoyl cysteine attachment. Residues 367 to 377 carry the Nuclear localization signal motif; sequence RGGRRRRRRRR. Disordered regions lie at residues 391–429 and 473–514; these read GGSLERSQSRKDSLDDSGSCMSGSQRTLPSASPSPGYLG and LGEP…PGHF. Polar residues predominate over residues 409–423; sequence SCMSGSQRTLPSASP.

The protein belongs to the G-protein coupled receptor 1 family. Adrenergic receptor subfamily. ADRA1B sub-subfamily. As to quaternary structure, homo- and heterooligomer. Heterooligomerizes with ADRA1B homooligomers in cardiac myocytes. Interacts with CAVIN4.

Its subcellular location is the nucleus membrane. It localises to the cell membrane. The protein localises to the cytoplasm. It is found in the membrane. The protein resides in the caveola. Its function is as follows. This alpha-adrenergic receptor mediates its action by association with G proteins that activate a phosphatidylinositol-calcium second messenger system. Its effect is mediated by G(q) and G(11) proteins. Nuclear ADRA1A-ADRA1B heterooligomers regulate phenylephrine (PE)-stimulated ERK signaling in cardiac myocytes. In Mus musculus (Mouse), this protein is Alpha-1B adrenergic receptor (Adra1b).